We begin with the raw amino-acid sequence, 506 residues long: Aldehyde dehydrogenase [NAD(P)+] 2 (506 aa).

The active-site Proton acceptor is Glu-268. The active-site Nucleophile is the Cys-302.

It belongs to the aldehyde dehydrogenase family.

It is found in the cytoplasm. The enzyme catalyses an aldehyde + NAD(+) + H2O = a carboxylate + NADH + 2 H(+). It carries out the reaction 3-aminopropanal + NAD(+) + H2O = beta-alanine + NADH + 2 H(+). Cytoplasmic aldehyde dehydrogenase involved in ethanol oxidation. Involved in pantothenic acid production through the conversion of 3-aminopropanal to beta-alanine, an intermediate in pantothenic acid (vitamin B5) and coenzyme A (CoA) biosynthesis. In Saccharomyces cerevisiae (strain ATCC 204508 / S288c) (Baker's yeast), this protein is Aldehyde dehydrogenase [NAD(P)+] 2 (ALD3).